Reading from the N-terminus, the 416-residue chain is UDP-N-acetylmuramoylalanine--D-glutamate ligase (416 aa).

Position 104 to 110 (104 to 110 (GSNGKST)) interacts with ATP.

It belongs to the MurCDEF family.

Its subcellular location is the cytoplasm. The enzyme catalyses UDP-N-acetyl-alpha-D-muramoyl-L-alanine + D-glutamate + ATP = UDP-N-acetyl-alpha-D-muramoyl-L-alanyl-D-glutamate + ADP + phosphate + H(+). It participates in cell wall biogenesis; peptidoglycan biosynthesis. Functionally, cell wall formation. Catalyzes the addition of glutamate to the nucleotide precursor UDP-N-acetylmuramoyl-L-alanine (UMA). This Francisella tularensis subsp. mediasiatica (strain FSC147) protein is UDP-N-acetylmuramoylalanine--D-glutamate ligase.